Reading from the N-terminus, the 392-residue chain is Phospho-N-acetylmuramoyl-pentapeptide-transferase (392 aa).

Helical transmembrane passes span 24 to 44, 76 to 96, 100 to 120, 137 to 157, 193 to 213, 225 to 245, 262 to 282, 289 to 309, 314 to 334, and 369 to 389; these read YLTFRAVMAAMTALLIGLLAG, TMGGVLILGAIAISTLLWFDL, FVWVVLAVTLGFGAIGWVDDW, YFWQSVIGIVAALYLVFCISE, VSYPLGVLGFVILTYLVIVGS, GLAIMPVVMVGASLGVFAYVT, AGELLIFCSAMAGAGLAFLWF, VFMGDVGALALGGALGTIAII, IVLAIMGGIFVVEALSVMLQV, and QVVVRFWIITMLLCLIGLTTL.

This sequence belongs to the glycosyltransferase 4 family. MraY subfamily. Mg(2+) serves as cofactor.

It is found in the cell inner membrane. The catalysed reaction is UDP-N-acetyl-alpha-D-muramoyl-L-alanyl-gamma-D-glutamyl-meso-2,6-diaminopimeloyl-D-alanyl-D-alanine + di-trans,octa-cis-undecaprenyl phosphate = di-trans,octa-cis-undecaprenyl diphospho-N-acetyl-alpha-D-muramoyl-L-alanyl-D-glutamyl-meso-2,6-diaminopimeloyl-D-alanyl-D-alanine + UMP. It functions in the pathway cell wall biogenesis; peptidoglycan biosynthesis. Functionally, catalyzes the initial step of the lipid cycle reactions in the biosynthesis of the cell wall peptidoglycan: transfers peptidoglycan precursor phospho-MurNAc-pentapeptide from UDP-MurNAc-pentapeptide onto the lipid carrier undecaprenyl phosphate, yielding undecaprenyl-pyrophosphoryl-MurNAc-pentapeptide, known as lipid I. The sequence is that of Phospho-N-acetylmuramoyl-pentapeptide-transferase from Paracidovorax citrulli (strain AAC00-1) (Acidovorax citrulli).